We begin with the raw amino-acid sequence, 424 residues long: Probable carboxypeptidase AN5749 (424 aa).

Positions 1 to 17 (MNLSILAALALVSFSTA) are cleaved as a signal peptide. N-linked (GlcNAc...) asparagine glycosylation occurs at Asn58. Zn(2+) is bound at residue Asp139. The Proton acceptor role is filled by Glu171. Glu172 contacts Zn(2+). N-linked (GlcNAc...) asparagine glycans are attached at residues Asn184 and Asn323.

Belongs to the peptidase M20A family. Zn(2+) is required as a cofactor.

It localises to the secreted. The chain is Probable carboxypeptidase AN5749 from Emericella nidulans (strain FGSC A4 / ATCC 38163 / CBS 112.46 / NRRL 194 / M139) (Aspergillus nidulans).